Consider the following 90-residue polypeptide: Long neurotoxin OH-34 (90 aa).

The N-terminal stretch at 1–20 (KTLLLTLVVVTILCLDLGYT) is a signal peptide. 5 disulfides stabilise this stretch: Cys-23–Cys-41, Cys-34–Cys-62, Cys-47–Cys-51, Cys-66–Cys-77, and Cys-78–Cys-83.

It belongs to the three-finger toxin family. Long-chain subfamily. Type II alpha-neurotoxin sub-subfamily. In terms of tissue distribution, expressed by the venom gland.

It localises to the secreted. Its function is as follows. Binds with high affinity to muscular (alpha-1/CHRNA1) and neuronal (alpha-7/CHRNA7) nicotinic acetylcholine receptor (nAChR) and inhibits acetylcholine from binding to the receptor, thereby impairing neuromuscular and neuronal transmission. This Ophiophagus hannah (King cobra) protein is Long neurotoxin OH-34.